Consider the following 297-residue polypeptide: ATP phosphoribosyltransferase (297 aa).

Belongs to the ATP phosphoribosyltransferase family.

It is found in the cytoplasm. It carries out the reaction 1-(5-phospho-beta-D-ribosyl)-ATP + diphosphate = 5-phospho-alpha-D-ribose 1-diphosphate + ATP. Its pathway is amino-acid biosynthesis; L-histidine biosynthesis; L-histidine from 5-phospho-alpha-D-ribose 1-diphosphate: step 1/9. Catalyzes the condensation of ATP and 5-phosphoribose 1-diphosphate to form N'-(5'-phosphoribosyl)-ATP (PR-ATP). Has a crucial role in the pathway because the rate of histidine biosynthesis seems to be controlled primarily by regulation of the enzymatic activity. The chain is ATP phosphoribosyltransferase (HIS1) from Eremothecium gossypii (strain ATCC 10895 / CBS 109.51 / FGSC 9923 / NRRL Y-1056) (Yeast).